The following is a 105-amino-acid chain: Antitoxin YfjZ (105 aa).

Belongs to the CbeA/YafW/YfjZ antitoxin family.

Antitoxin component of a type IV toxin-antitoxin (TA) system. Antitoxin that counteracts the effect of cognate toxin YpjF. Also counteracts the effect of non-cognate toxins CbtA and YfkI. This is Antitoxin YfjZ (yfjZ) from Escherichia coli (strain K12).